We begin with the raw amino-acid sequence, 407 residues long: MTDDHPRADIVSRQYHRWLYPHPIADLEAWTTANWEWFDPVHSHRILWPDREYRPDLDILIAGCGTNQAAIFAFTNRAAKVVAIDISRPALDHQQYLKDKHGLANLELHLLPIEELATLGRDFDLVVSTGVLHHLADPRAGMKELAHCLRRDGVVAAMLYGKYGRIGVELLGSVFRDLGLGQDDASIKLAKEAISLLPTYHPLRNYLTKARDLLSDSALVDTFLHGRQRSYTVEECVDLVTSAGLVFQGWFHKAPYYPHDFFVPNSEFYAAVNTLPEVKAWSVMERLKTLNATHLFMACRRDRPKEQYTIDFSTVAALDYVPLMRTRCGVSGTDMFWPGWRMAPSPAQLAFLQQVDGRRTIREIAGCVARTGEPSGGSLADLEEFGRKLFQSLWRLDFVAVALPASG.

This is an uncharacterized protein from Mycobacterium tuberculosis (strain CDC 1551 / Oshkosh).